The following is a 344-amino-acid chain: Acetylpolyamine amidohydrolase 2 (344 aa).

The active-site Proton donor/acceptor is the H159. Zn(2+) is bound by residues D195, H197, and D284.

Belongs to the histone deacetylase family. As to quaternary structure, homodimer. Zn(2+) serves as cofactor.

The catalysed reaction is N-acetylputrescine + H2O = putrescine + acetate. It carries out the reaction N-acetylcadaverine + H2O = cadaverine + acetate. It functions in the pathway amine and polyamine metabolism. In terms of biological role, catalyzes the deacetylation of acetylated polyamines such as N-acetylputrescine and N-acetylcadaverine. Plays an important role in the metabolism of acetylated polyamines in P.aeruginosa. Is involved in the degradation pathways of N-acetylputrescine and N-acetylcadaverine, that allow P.aeruginosa to utilize these acetylpolyamines as a carbon source under glucose starvation. Shows nearly no activity against N(1)-acetylspermine and N(1)-acetylspermidine. Can also hydrolyze artificial trifluoroacetylated lysine-derivative, and to a lesser extent, acetylated lysine-derivative. The protein is Acetylpolyamine amidohydrolase 2 of Pseudomonas aeruginosa (strain ATCC 15692 / DSM 22644 / CIP 104116 / JCM 14847 / LMG 12228 / 1C / PRS 101 / PAO1).